Reading from the N-terminus, the 528-residue chain is (R)-citramalate synthase (528 aa).

One can recognise a Pyruvate carboxyltransferase domain in the interval 5–271 (VYIYDTTLRD…IPQENLKKLT (267 aa)).

The protein belongs to the alpha-IPM synthase/homocitrate synthase family.

It carries out the reaction pyruvate + acetyl-CoA + H2O = (3R)-citramalate + CoA + H(+). It functions in the pathway amino-acid biosynthesis; L-isoleucine biosynthesis; 2-oxobutanoate from pyruvate: step 1/3. Catalyzes the condensation of pyruvate and acetyl-coenzyme A to form (R)-citramalate. The sequence is that of (R)-citramalate synthase from Aquifex aeolicus (strain VF5).